Reading from the N-terminus, the 200-residue chain is Holliday junction branch migration complex subunit RuvA (200 aa).

Positions 1-64 (MIAHLTGLVG…EDAFLLYGFA (64 aa)) are domain I. The tract at residues 65–143 (EAAERDWFRL…RMPAGPGVTI (79 aa)) is domain II. The interval 144-147 (AAPP) is flexible linker. Residues 148 to 200 (ASGGVEADALLALAGLGFRRAEAQPVVGRILARLDGKADLDVVIRESLRELAR) form a domain III region.

Belongs to the RuvA family. As to quaternary structure, homotetramer. Forms an RuvA(8)-RuvB(12)-Holliday junction (HJ) complex. HJ DNA is sandwiched between 2 RuvA tetramers; dsDNA enters through RuvA and exits via RuvB. An RuvB hexamer assembles on each DNA strand where it exits the tetramer. Each RuvB hexamer is contacted by two RuvA subunits (via domain III) on 2 adjacent RuvB subunits; this complex drives branch migration. In the full resolvosome a probable DNA-RuvA(4)-RuvB(12)-RuvC(2) complex forms which resolves the HJ.

It is found in the cytoplasm. Functionally, the RuvA-RuvB-RuvC complex processes Holliday junction (HJ) DNA during genetic recombination and DNA repair, while the RuvA-RuvB complex plays an important role in the rescue of blocked DNA replication forks via replication fork reversal (RFR). RuvA specifically binds to HJ cruciform DNA, conferring on it an open structure. The RuvB hexamer acts as an ATP-dependent pump, pulling dsDNA into and through the RuvAB complex. HJ branch migration allows RuvC to scan DNA until it finds its consensus sequence, where it cleaves and resolves the cruciform DNA. In Gluconacetobacter diazotrophicus (strain ATCC 49037 / DSM 5601 / CCUG 37298 / CIP 103539 / LMG 7603 / PAl5), this protein is Holliday junction branch migration complex subunit RuvA.